A 99-amino-acid polypeptide reads, in one-letter code: Ragulator complex protein LAMTOR4 (99 aa).

Met1 is subject to N-acetylmethionine. Thr2 bears the N-acetylthreonine; in Ragulator complex protein LAMTOR4, N-terminally processed mark. Ser67 is subject to Phosphoserine.

The protein belongs to the LAMTOR4 family. Part of the Ragulator complex composed of LAMTOR1, LAMTOR2, LAMTOR3, LAMTOR4 and LAMTOR5. LAMTOR4 and LAMTOR5 form a heterodimer that interacts, through LAMTOR1, with a LAMTOR2, LAMTOR3 heterodimer. The Ragulator complex interacts with both the mTORC1 complex and heterodimers constituted of the Rag GTPases RagA/RRAGA, RagB/RRAGB, RagC/RRAGC and RagD/RRAGD; regulated by amino acid availability. The Ragulator complex interacts with SLC38A9; the probable amino acid sensor. Component of the lysosomal folliculin complex (LFC), composed of FLCN, FNIP1 (or FNIP2), RagA/RRAGA or RagB/RRAGB GDP-bound, RagC/RRAGC or RagD/RRAGD GTP-bound, and Ragulator. Phosphorylation at Ser-67 by PKA inhibits Ragulator complex assembly.

It localises to the lysosome. As part of the Ragulator complex it is involved in amino acid sensing and activation of mTORC1, a signaling complex promoting cell growth in response to growth factors, energy levels, and amino acids. Activated by amino acids through a mechanism involving the lysosomal V-ATPase, the Ragulator plays a dual role for the small GTPases Rag (RagA/RRAGA, RagB/RRAGB, RagC/RRAGC and/or RagD/RRAGD): it (1) acts as a guanine nucleotide exchange factor (GEF), activating the small GTPases Rag and (2) mediates recruitment of Rag GTPases to the lysosome membrane. Activated Ragulator and Rag GTPases function as a scaffold recruiting mTORC1 to lysosomes where it is in turn activated. The chain is Ragulator complex protein LAMTOR4 (LAMTOR4) from Bos taurus (Bovine).